Consider the following 1405-residue polypeptide: Rho guanine nucleotide exchange factor 18 (1405 aa).

Disordered stretches follow at residues 1 to 47 (MGSE…EDGF), 92 to 115 (ETHR…ALPQ), and 289 to 330 (PGKS…PGKR). Composition is skewed to basic and acidic residues over residues 92-103 (ETHRQEARRESS) and 308-330 (RQKE…PGKR). The segment at 347–372 (SSCPLCGEPLLNSASLKEHPRTTLLS) adopts a C2H2-type; degenerate zinc-finger fold. A DH domain is found at 485-682 (KRQDVLYELM…KDIISQVDAK (198 aa)). Positions 723–825 (QLHLEGALCW…WMAHIRRAVE (103 aa)) constitute a PH domain. The tract at residues 936–1016 (QVEEGSVSAG…PQAVEMPSTE (81 aa)) is disordered. Phosphothreonine is present on Thr952. Ser961 carries the post-translational modification Phosphoserine. Residues 1084–1181 (FEKQREERAG…RERLELLRRF (98 aa)) are a coiled coil. Disordered stretches follow at residues 1198–1242 (EAQP…VERP), 1274–1309 (RQTA…WESS), and 1328–1405 (ESAS…VIFF). Ser1336 and Ser1338 each carry phosphoserine. The span at 1355-1365 (FPAPSPAPAAT) shows a compositional bias: pro residues. Residues 1375–1394 (TSLPPVSPASSLPTTPLATT) show a composition bias toward low complexity. Basic and acidic residues predominate over residues 1396-1405 (EVSKEDVIFF).

In terms of assembly, interacts with SEPT9; interaction may inhibit GEF activity. Interacts with Gbetagamma subunits GNB1 and GNG2. Interacts with EPB41L4B. Interacts with PATJ (via C-terminus).

The protein resides in the cytoplasm. It localises to the cytoskeleton. Its subcellular location is the cell membrane. The protein localises to the apical cell membrane. Acts as a guanine nucleotide exchange factor (GEF) for RhoA GTPases. May play a role in actin cytoskeleton reorganization in different tissues since its activation induces formation of actin stress fibers. Also acts as a GEF for RAC1, inducing production of reactive oxygen species (ROS). Does not act as a GEF for CDC42. The G protein beta-gamma (Gbetagamma) subunits of heterotrimeric G proteins act as activators, explaining the integrated effects of LPA and other G-protein coupled receptor agonists on actin stress fiber formation, cell shape change and ROS production. Required for EPB41L4B-mediated regulation of the circumferential actomyosin belt in epithelial cells. The sequence is that of Rho guanine nucleotide exchange factor 18 (Arhgef18) from Mus musculus (Mouse).